Here is a 282-residue protein sequence, read N- to C-terminus: HTH-type transcriptional activator RhaR (282 aa).

The region spanning 179 to 277 (DKLITALANS…GMTPSQWRHL (99 aa)) is the HTH araC/xylS-type domain. 2 consecutive DNA-binding regions (H-T-H motif) follow at residues 196–217 (DAFC…RAQT) and 244–267 (VSEI…TRET).

As to quaternary structure, binds DNA as a dimer.

It localises to the cytoplasm. In terms of biological role, activates expression of the rhaSR operon in response to L-rhamnose. The polypeptide is HTH-type transcriptional activator RhaR (Salmonella choleraesuis (strain SC-B67)).